We begin with the raw amino-acid sequence, 226 residues long: Lipoprotein-releasing system ATP-binding protein LolD (226 aa).

Positions 6–226 (VLISGLTKTF…KLYKGNLEEV (221 aa)) constitute an ABC transporter domain. Residue 42 to 49 (GESGSGKS) participates in ATP binding.

The protein belongs to the ABC transporter superfamily. Lipoprotein translocase (TC 3.A.1.125) family. As to quaternary structure, the complex is composed of two ATP-binding proteins (LolD) and two transmembrane proteins (LolC and LolE).

It is found in the cell inner membrane. Functionally, part of the ABC transporter complex LolCDE involved in the translocation of mature outer membrane-directed lipoproteins, from the inner membrane to the periplasmic chaperone, LolA. Responsible for the formation of the LolA-lipoprotein complex in an ATP-dependent manner. The polypeptide is Lipoprotein-releasing system ATP-binding protein LolD (Treponema denticola (strain ATCC 35405 / DSM 14222 / CIP 103919 / JCM 8153 / KCTC 15104)).